The chain runs to 85 residues: Alpha-toxin BmalphaTx47 (85 aa).

The signal sequence occupies residues 1–19 (MNYLIVISFALLLMTGVQS). The 63-residue stretch at 21–83 (RDAYIADSEN…VPIRISGSCR (63 aa)) folds into the LCN-type CS-alpha/beta domain. 4 disulfides stabilise this stretch: Cys-31–Cys-82, Cys-35–Cys-55, Cys-41–Cys-65, and Cys-45–Cys-67.

The protein belongs to the long (4 C-C) scorpion toxin superfamily. Sodium channel inhibitor family. Alpha subfamily. Expressed by the venom gland.

The protein resides in the secreted. Its function is as follows. Alpha toxins bind voltage-independently at site-3 of sodium channels (Nav) and inhibit the inactivation of the activated channels, thereby blocking neuronal transmission. This toxin expressed with the pET-14b vector has low inhibitory activity on sodium channels (11.33% on rNav1.2/SCN2A, 15.96% on mNav1.4/SCN4A and 5.04% on hNav1.5/SCN5A). When expressed with the pET-28a vector, this toxin has higher inhibitory activities (44.12% on rNav1.2/SCN2A, 25.40% on mNav1.4/SCN4A and 65.34% on hNav1.5/SCN5A). The protein is Alpha-toxin BmalphaTx47 of Olivierus martensii (Manchurian scorpion).